The primary structure comprises 748 residues: Cytosolic phospholipase A2 (748 aa).

The tract at residues 1 to 178 (MSFIDPYQHI…MKSFLGEENS (178 aa)) is phospholipid binding. The C2 domain maps to 6–124 (PYQHIVVEHQ…GEKKEVQLTF (119 aa)). 7 residues coordinate Ca(2+): Asp-40, Thr-41, Asp-43, Asn-65, Asp-93, Ala-94, and Asn-95. Positions 138 to 740 (VCSSTDLRFS…SSVEARRFFN (603 aa)) constitute a PLA2c domain. Ser-228 functions as the Nucleophile in the catalytic mechanism. Residues 431 to 459 (SNDSSDSEDESQHPKGTENSEANEEYQNS) form a disordered region. A compositionally biased stretch (polar residues) spans 449–459 (NSEANEEYQNS). Phosphoserine; by MAPK is present on Ser-505. Asp-549 acts as the Proton acceptor in catalysis.

In terms of processing, activated by phosphorylation on a serine residue.

Its subcellular location is the cytoplasm. It is found in the cytoplasmic vesicle. The catalysed reaction is a 1,2-diacyl-sn-glycero-3-phosphocholine + H2O = a 1-acyl-sn-glycero-3-phosphocholine + a fatty acid + H(+). It catalyses the reaction a 1-acyl-sn-glycero-3-phosphocholine + H2O = sn-glycerol 3-phosphocholine + a fatty acid + H(+). With respect to regulation, stimulated by agonists such as ATP, EGF, thrombin and bradykinin as well as by cytosolic Ca(2+). Functionally, selectively hydrolyzes arachidonyl phospholipids in the sn-2 position releasing arachidonic acid. Together with its lysophospholipid activity, it is implicated in the initiation of the inflammatory response. The sequence is that of Cytosolic phospholipase A2 (PLA2G4A) from Gallus gallus (Chicken).